The sequence spans 224 residues: Peptidyl-prolyl cis-trans isomerase FKBP3 (224 aa).

Position 2 is an N-acetylalanine (Ala2). Ser36 is modified (phosphoserine). A compositionally biased stretch (basic and acidic residues) spans Lys89–Glu102. A disordered region spans residues Lys89 to Lys113. Lys99 carries the N6-acetyllysine modification. Positions Gly128–Asp224 constitute a PPIase FKBP-type domain. Phosphoserine is present on Ser152. N6-acetyllysine is present on Lys170.

It belongs to the FKBP-type PPIase family.

It is found in the nucleus. The enzyme catalyses [protein]-peptidylproline (omega=180) = [protein]-peptidylproline (omega=0). With respect to regulation, inhibited preferentially by rapamycin over FK506. In terms of biological role, FK506- and rapamycin-binding proteins (FKBPs) constitute a family of receptors for the two immunosuppressants which inhibit T-cell proliferation by arresting two dinstinct cytoplasmic signal transmission pathways. PPIases accelerate the folding of proteins. In Bos taurus (Bovine), this protein is Peptidyl-prolyl cis-trans isomerase FKBP3 (FKBP3).